A 349-amino-acid chain; its full sequence is UDP-3-O-acylglucosamine N-acyltransferase (349 aa).

H240 (proton acceptor) is an active-site residue.

The protein belongs to the transferase hexapeptide repeat family. LpxD subfamily. In terms of assembly, homotrimer.

The catalysed reaction is a UDP-3-O-[(3R)-3-hydroxyacyl]-alpha-D-glucosamine + a (3R)-hydroxyacyl-[ACP] = a UDP-2-N,3-O-bis[(3R)-3-hydroxyacyl]-alpha-D-glucosamine + holo-[ACP] + H(+). It participates in bacterial outer membrane biogenesis; LPS lipid A biosynthesis. Catalyzes the N-acylation of UDP-3-O-acylglucosamine using 3-hydroxyacyl-ACP as the acyl donor. Is involved in the biosynthesis of lipid A, a phosphorylated glycolipid that anchors the lipopolysaccharide to the outer membrane of the cell. The protein is UDP-3-O-acylglucosamine N-acyltransferase of Porphyromonas gingivalis (strain ATCC BAA-308 / W83).